The following is a 132-amino-acid chain: ATP synthase epsilon chain (132 aa).

This sequence belongs to the ATPase epsilon chain family. F-type ATPases have 2 components, CF(1) - the catalytic core - and CF(0) - the membrane proton channel. CF(1) has five subunits: alpha(3), beta(3), gamma(1), delta(1), epsilon(1). CF(0) has three main subunits: a, b and c.

It is found in the cell membrane. In terms of biological role, produces ATP from ADP in the presence of a proton gradient across the membrane. This Bacillus velezensis (strain DSM 23117 / BGSC 10A6 / LMG 26770 / FZB42) (Bacillus amyloliquefaciens subsp. plantarum) protein is ATP synthase epsilon chain.